A 180-amino-acid chain; its full sequence is Interleukin-17B (180 aa).

The N-terminal stretch at 1 to 20 (MDWPHNLLFLLTISIFLGLG) is a signal peptide. The disordered stretch occupies residues 22–44 (PRSPKSKRKGQGRPGPLAPGPHQ). The N-linked (GlcNAc...) asparagine glycan is linked to Asn-75. 2 disulfide bridges follow: Cys-121-Cys-176 and Cys-126-Cys-178.

The protein belongs to the IL-17 family. Expressed in adult pancreas, small intestine, stomach, spinal cord and testis. Less pronounced expression in prostate, colon mucosal lining, and ovary.

Its subcellular location is the secreted. Stimulates the release of tumor necrosis factor alpha and IL-1-beta from the monocytic cell line THP-1. The polypeptide is Interleukin-17B (IL17B) (Homo sapiens (Human)).